Here is an 879-residue protein sequence, read N- to C-terminus: Leucine--tRNA ligase (879 aa).

A 'HIGH' region motif is present at residues 46-56 (PYPSGALHMGH). Residues 638–642 (KMSKS) carry the 'KMSKS' region motif. Residue K641 coordinates ATP.

Belongs to the class-I aminoacyl-tRNA synthetase family.

It localises to the cytoplasm. It carries out the reaction tRNA(Leu) + L-leucine + ATP = L-leucyl-tRNA(Leu) + AMP + diphosphate. This Xanthomonas campestris pv. campestris (strain 8004) protein is Leucine--tRNA ligase.